The sequence spans 261 residues: Indole-3-glycerol phosphate synthase (261 aa).

This sequence belongs to the TrpC family.

It carries out the reaction 1-(2-carboxyphenylamino)-1-deoxy-D-ribulose 5-phosphate + H(+) = (1S,2R)-1-C-(indol-3-yl)glycerol 3-phosphate + CO2 + H2O. Its pathway is amino-acid biosynthesis; L-tryptophan biosynthesis; L-tryptophan from chorismate: step 4/5. The protein is Indole-3-glycerol phosphate synthase of Campylobacter concisus (strain 13826).